We begin with the raw amino-acid sequence, 201 residues long: Imidazole glycerol phosphate synthase subunit HisH (201 aa).

The 201-residue stretch at 1 to 201 (MIIVIDYDAG…ILKKFVDLCD (201 aa)) folds into the Glutamine amidotransferase type-1 domain. Cysteine 79 serves as the catalytic Nucleophile. Catalysis depends on residues histidine 181 and glutamate 183.

As to quaternary structure, heterodimer of HisH and HisF.

The protein localises to the cytoplasm. The enzyme catalyses 5-[(5-phospho-1-deoxy-D-ribulos-1-ylimino)methylamino]-1-(5-phospho-beta-D-ribosyl)imidazole-4-carboxamide + L-glutamine = D-erythro-1-(imidazol-4-yl)glycerol 3-phosphate + 5-amino-1-(5-phospho-beta-D-ribosyl)imidazole-4-carboxamide + L-glutamate + H(+). It catalyses the reaction L-glutamine + H2O = L-glutamate + NH4(+). The protein operates within amino-acid biosynthesis; L-histidine biosynthesis; L-histidine from 5-phospho-alpha-D-ribose 1-diphosphate: step 5/9. Functionally, IGPS catalyzes the conversion of PRFAR and glutamine to IGP, AICAR and glutamate. The HisH subunit catalyzes the hydrolysis of glutamine to glutamate and ammonia as part of the synthesis of IGP and AICAR. The resulting ammonia molecule is channeled to the active site of HisF. The polypeptide is Imidazole glycerol phosphate synthase subunit HisH (Streptococcus mutans serotype c (strain ATCC 700610 / UA159)).